Reading from the N-terminus, the 37-residue chain is Large ribosomal subunit protein bL36 (37 aa).

Belongs to the bacterial ribosomal protein bL36 family.

This is Large ribosomal subunit protein bL36 from Mycoplasmopsis pulmonis (strain UAB CTIP) (Mycoplasma pulmonis).